Reading from the N-terminus, the 689-residue chain is Glycine--tRNA ligase beta subunit (689 aa).

It belongs to the class-II aminoacyl-tRNA synthetase family. Tetramer of two alpha and two beta subunits.

It localises to the cytoplasm. The catalysed reaction is tRNA(Gly) + glycine + ATP = glycyl-tRNA(Gly) + AMP + diphosphate. The sequence is that of Glycine--tRNA ligase beta subunit from Enterobacter sp. (strain 638).